Here is a 105-residue protein sequence, read N- to C-terminus: Small ribosomal subunit protein uS10 (105 aa).

The protein belongs to the universal ribosomal protein uS10 family. As to quaternary structure, part of the 30S ribosomal subunit.

Involved in the binding of tRNA to the ribosomes. The chain is Small ribosomal subunit protein uS10 from Rickettsia rickettsii (strain Iowa).